The chain runs to 366 residues: MDTFWWRAAWGLCLVQLSLAQIDLNITCRYAGVFHVEKNGRYSISKTEAADLCKAFNSTLPTMAQMEAARNIGFETCRYGFIEGHVVIPRIHPNSICAANNTGVYILTSNTSQYDTICFNASAPPGEDCTSVTDLPNAFEGPITITIVNRDGTRYTKKGEYRTNPEDINPSVVSPSSPPDDEMSSGSPSERSTSGGYSIFHTHLPTVHPSRPRRPWSQRAENTSDTRDYGSSHDPSGRSYTTHASESAGHSSGSEEHGANTTSGPMRKPQIPEWLIILASLLALALILAVCIAVNSRRRCGQKKKLVINNGNGTMEERKPSGLNGEASKSQEMVHLVNKGSSETPDQFMTADETRNLQNVDMKIGV.

Positions 1-20 (MDTFWWRAAWGLCLVQLSLA) are cleaved as a signal peptide. The Extracellular portion of the chain corresponds to 21–273 (QIDLNITCRY…GPMRKPQIPE (253 aa)). N25 carries N-linked (GlcNAc...) asparagine glycosylation. 3 cysteine pairs are disulfide-bonded: C28/C129, C53/C118, and C77/C97. The 89-residue stretch at 32-120 (GVFHVEKNGR…TSQYDTICFN (89 aa)) folds into the Link domain. R41 provides a ligand contact to hyaluronan. A glycan (N-linked (GlcNAc...) asparagine) is linked at N57. R78 and Y79 together coordinate hyaluronan. An N-linked (GlcNAc...) asparagine glycan is attached at N100. Y105 contacts hyaluronan. N-linked (GlcNAc...) asparagine glycans are attached at residues N110 and N120. The segment covering 156-165 (TKKGEYRTNP) has biased composition (basic and acidic residues). The interval 156–266 (TKKGEYRTNP…HGANTTSGPM (111 aa)) is disordered. Over residues 184-196 (SSGSPSERSTSGG) the composition is skewed to low complexity. The O-linked (Xyl...) (chondroitin sulfate) serine glycan is linked to S185. An N-linked (GlcNAc...) asparagine glycan is attached at N222. A compositionally biased stretch (basic and acidic residues) spans 222 to 231 (NTSDTRDYGS). Positions 229–273 (YGSSHDPSGRSYTTHASESAGHSSGSEEHGANTTSGPMRKPQIPE) are stem. Low complexity predominate over residues 243–252 (HASESAGHSS). A glycan (N-linked (GlcNAc...) asparagine) is linked at N260. The helical transmembrane segment at 274–294 (WLIILASLLALALILAVCIAV) threads the bilayer. The Cytoplasmic portion of the chain corresponds to 295–366 (NSRRRCGQKK…LQNVDMKIGV (72 aa)). At S296 the chain carries Phosphoserine; by PKC. The segment at 297–315 (RRRCGQKKKLVINNGNGTM) is required for interaction with EZR, MSN and RDX and for co-localization to microvilli. T314 bears the Phosphothreonine mark. S321 and S330 each carry phosphoserine.

Interacts with PKN2. Interacts with TIAM1 and TIAM2. Interacts with HA, as well as other glycosaminoglycans, collagen, laminin, and fibronectin via its N-terminal segment. Interacts with UNC119. Interacts with PDPN (via extracellular domain); this interaction is required for PDPN-mediated directional migration and regulation of lamellipodia extension/stabilization during cell spreading and migration. Interacts with RDX, EZR and MSN. Interacts with EGFR. Interacts with CD74; this complex is essential for the MIF-induced signaling cascade that results in B cell survival. In terms of processing, N-glycosylated. O-glycosylated; contains chondroitin sulfate glycans which can be more or less sulfated. Post-translationally, phosphorylated; activation of PKC results in the dephosphorylation of Ser-330 (constitutive phosphorylation site), and the phosphorylation of Ser-296. Mesenteric lymph node and liver, not in heart.

Its subcellular location is the cell membrane. It is found in the cell projection. It localises to the microvillus. The protein resides in the secreted. Cell-surface receptor that plays a role in cell-cell interactions, cell adhesion and migration, helping them to sense and respond to changes in the tissue microenvironment. Participates thereby in a wide variety of cellular functions including the activation, recirculation and homing of T-lymphocytes, hematopoiesis, inflammation and response to bacterial infection. Engages, through its ectodomain, extracellular matrix components such as hyaluronan/HA, collagen, growth factors, cytokines or proteases and serves as a platform for signal transduction by assembling, via its cytoplasmic domain, protein complexes containing receptor kinases and membrane proteases. Such effectors include PKN2, the RhoGTPases RAC1 and RHOA, Rho-kinases and phospholipase C that coordinate signaling pathways promoting calcium mobilization and actin-mediated cytoskeleton reorganization essential for cell migration and adhesion. The polypeptide is CD44 antigen (CD44) (Bos taurus (Bovine)).